Reading from the N-terminus, the 303-residue chain is Methionyl-tRNA formyltransferase (303 aa).

108 to 111 provides a ligand contact to (6S)-5,6,7,8-tetrahydrofolate; that stretch reads SDLP.

Belongs to the Fmt family.

It carries out the reaction L-methionyl-tRNA(fMet) + (6R)-10-formyltetrahydrofolate = N-formyl-L-methionyl-tRNA(fMet) + (6S)-5,6,7,8-tetrahydrofolate + H(+). Attaches a formyl group to the free amino group of methionyl-tRNA(fMet). The formyl group appears to play a dual role in the initiator identity of N-formylmethionyl-tRNA by promoting its recognition by IF2 and preventing the misappropriation of this tRNA by the elongation apparatus. This is Methionyl-tRNA formyltransferase from Rickettsia felis (strain ATCC VR-1525 / URRWXCal2) (Rickettsia azadi).